Here is a 304-residue protein sequence, read N- to C-terminus: Homoserine kinase (304 aa).

90–100 (PLARGLGSSAS) serves as a coordination point for ATP.

This sequence belongs to the GHMP kinase family. Homoserine kinase subfamily.

Its subcellular location is the cytoplasm. The catalysed reaction is L-homoserine + ATP = O-phospho-L-homoserine + ADP + H(+). It functions in the pathway amino-acid biosynthesis; L-threonine biosynthesis; L-threonine from L-aspartate: step 4/5. In terms of biological role, catalyzes the ATP-dependent phosphorylation of L-homoserine to L-homoserine phosphate. The polypeptide is Homoserine kinase (Staphylococcus aureus (strain NCTC 8325 / PS 47)).